Reading from the N-terminus, the 544-residue chain is Chaperonin GroEL (544 aa).

Residues 29–32, 86–90, Gly-413, 478–480, and Asp-494 contribute to the ATP site; these read TLGP, DGTTT, and NAA.

Belongs to the chaperonin (HSP60) family. In terms of assembly, forms a cylinder of 14 subunits composed of two heptameric rings stacked back-to-back. Interacts with the co-chaperonin GroES.

It localises to the cytoplasm. The enzyme catalyses ATP + H2O + a folded polypeptide = ADP + phosphate + an unfolded polypeptide.. In terms of biological role, together with its co-chaperonin GroES, plays an essential role in assisting protein folding. The GroEL-GroES system forms a nano-cage that allows encapsulation of the non-native substrate proteins and provides a physical environment optimized to promote and accelerate protein folding. This is Chaperonin GroEL from Lysinibacillus sphaericus (strain C3-41).